Consider the following 235-residue polypeptide: MALQVDAPDVSSYDELYNRAVELLKHQQRVLIGLAGGPGSGKSTLCAILAKAWNERFGSEIVKIIPMDGFHYSLEELDRFDNPEKARALRGAEWTFDADLFYSLVRLMKKITDRELYAPSFDHAIGDPVVDDICVEPKNRILIFEGNYLLLNKPPWSDACKLYDIKAYLPVEHSVARARVAHRHLVSGLCATEEEAIERTDRNDMINLTFVEKNMVTPDIVLQQLRLKTVKTSSL.

An ATP-binding site is contributed by 36–43 (GGPGSGKS).

It belongs to the uridine kinase family.

Its subcellular location is the cytoplasm. The protein localises to the nucleus. The enzyme catalyses uridine + ATP = UMP + ADP + H(+). It carries out the reaction cytidine + ATP = CMP + ADP + H(+). The protein operates within pyrimidine metabolism; CTP biosynthesis via salvage pathway; CTP from cytidine: step 1/3. It functions in the pathway pyrimidine metabolism; UMP biosynthesis via salvage pathway; UMP from uridine: step 1/1. The polypeptide is Putative uridine kinase C227.14 (Schizosaccharomyces pombe (strain 972 / ATCC 24843) (Fission yeast)).